Here is a 515-residue protein sequence, read N- to C-terminus: Maturase K (515 aa).

This sequence belongs to the intron maturase 2 family. MatK subfamily.

Its subcellular location is the plastid. It localises to the chloroplast. Its function is as follows. Usually encoded in the trnK tRNA gene intron. Probably assists in splicing its own and other chloroplast group II introns. The chain is Maturase K from Pinus armandii (Chinese white pine).